Consider the following 881-residue polypeptide: Squamosa promoter-binding-like protein 1 (881 aa).

The interval Phe-49–Lys-69 is disordered. Residues Asn-53 to Ser-62 show a composition bias toward low complexity. The segment at Pro-96–Asn-187 is sufficient and necessary for DNA binding. An SBP-type zinc finger spans residues Gly-103 to Thr-180. Zn(2+)-binding residues include Cys-106, Cys-111, Cys-128, His-131, Cys-147, Cys-150, His-154, and Cys-166. Residues Lys-163 to Lys-179 carry the Bipartite nuclear localization signal motif. The segment covering Leu-170–Lys-179 has biased composition (basic residues). 2 disordered regions span residues Leu-170 to Asp-193 and Phe-274 to Gln-358. Residues Ser-275–Glu-284 are compositionally biased toward polar residues. Basic and acidic residues predominate over residues Asn-285–Asp-295. Polar residues predominate over residues Pro-319–Thr-338. The segment covering Ser-339–Asp-356 has biased composition (low complexity).

Zn(2+) is required as a cofactor.

Its subcellular location is the nucleus. Functionally, trans-acting factor that binds specifically to the consensus nucleotide sequence 5'-TNCGTACAA-3' of AP1 promoter. Binds specifically to the 5'-GTAC-3' core sequence. The chain is Squamosa promoter-binding-like protein 1 (SPL1) from Arabidopsis thaliana (Mouse-ear cress).